The sequence spans 354 residues: N-acetyl-gamma-glutamyl-phosphate reductase (354 aa).

Cys-156 is an active-site residue.

Belongs to the NAGSA dehydrogenase family. Type 1 subfamily.

It is found in the cytoplasm. The enzyme catalyses N-acetyl-L-glutamate 5-semialdehyde + phosphate + NADP(+) = N-acetyl-L-glutamyl 5-phosphate + NADPH + H(+). It participates in amino-acid biosynthesis; L-arginine biosynthesis; N(2)-acetyl-L-ornithine from L-glutamate: step 3/4. Catalyzes the NADPH-dependent reduction of N-acetyl-5-glutamyl phosphate to yield N-acetyl-L-glutamate 5-semialdehyde. This Bordetella bronchiseptica (strain ATCC BAA-588 / NCTC 13252 / RB50) (Alcaligenes bronchisepticus) protein is N-acetyl-gamma-glutamyl-phosphate reductase.